A 912-amino-acid polypeptide reads, in one-letter code: Brevican core protein (912 aa).

The first 22 residues, 1-22 (MAPLFLPLLATLVLAWIPVALA), serve as a signal peptide directing secretion. The Ig-like V-type domain maps to 36-155 (RVRIAGDAPL…SSDAVEVKVK (120 aa)). 5 disulfides stabilise this stretch: cysteine 57-cysteine 137, cysteine 179-cysteine 250, cysteine 203-cysteine 224, cysteine 277-cysteine 352, and cysteine 301-cysteine 322. Asparagine 130 carries an N-linked (GlcNAc...) asparagine glycan. 2 consecutive Link domains span residues 157-252 (VVFL…YCYA) and 257-354 (GELF…YCFR). The N-linked (GlcNAc...) asparagine glycan is linked to asparagine 337. 2 disordered regions span residues 408 to 427 (IPIIEDGGGGSSTPEDPAEA) and 438 to 651 (SIVP…SGDC). Serine 418 is subject to Phosphoserine. A glycan (O-linked (Xyl...) (chondroitin sulfate) serine) is linked at serine 418. Over residues 448-463 (EEGKVLEQEEKYRGEE) the composition is skewed to basic and acidic residues. A compositionally biased stretch (acidic residues) spans 464-478 (EKEEEEEEEEVEDEA). Over residues 520–537 (VSPPPYDEPEAPRPPRVL) the composition is skewed to pro residues. Positions 603 to 617 (GDTRDLETPSEENSR) are enriched in basic and acidic residues. An EGF-like domain is found at 647 to 683 (SSGDCVPSPCHNGGTCLEEEEGVRCLCLPGYGGDLCD). Intrachain disulfides connect cysteine 651/cysteine 662, cysteine 656/cysteine 671, cysteine 673/cysteine 682, cysteine 689/cysteine 700, cysteine 717/cysteine 809, cysteine 785/cysteine 801, cysteine 816/cysteine 859, and cysteine 845/cysteine 872. One can recognise a C-type lectin domain in the interval 683–811 (DVGLHFCSPG…NYHLSYTCKM (129 aa)). The Sushi domain maps to 814–874 (VSCGPPPELP…WGLPQISCVP (61 aa)).

The protein belongs to the aggrecan/versican proteoglycan family. In terms of assembly, interacts with TNR. Post-translationally, O-glycosylated; contains chondroitin sulfate. As to expression, brain; expressed in cerebellar astrocytes but not in neurons.

Its subcellular location is the secreted. It localises to the extracellular space. It is found in the extracellular matrix. Functionally, may play a role in the terminally differentiating and the adult nervous system during postnatal development. Could stabilize interactions between hyaluronan (HA) and brain proteoglycans. The protein is Brevican core protein (BCAN) of Bos taurus (Bovine).